Reading from the N-terminus, the 426-residue chain is Serine--tRNA ligase (426 aa).

231-233 serves as a coordination point for L-serine; that stretch reads TAE. Residues 262-264 and Val-278 contribute to the ATP site; that span reads RRE. Residue Glu-285 participates in L-serine binding. 349–352 serves as a coordination point for ATP; it reads EVSS. Ser-384 lines the L-serine pocket.

The protein belongs to the class-II aminoacyl-tRNA synthetase family. Type-1 seryl-tRNA synthetase subfamily. Homodimer. The tRNA molecule binds across the dimer.

The protein resides in the cytoplasm. It catalyses the reaction tRNA(Ser) + L-serine + ATP = L-seryl-tRNA(Ser) + AMP + diphosphate + H(+). It carries out the reaction tRNA(Sec) + L-serine + ATP = L-seryl-tRNA(Sec) + AMP + diphosphate + H(+). It functions in the pathway aminoacyl-tRNA biosynthesis; selenocysteinyl-tRNA(Sec) biosynthesis; L-seryl-tRNA(Sec) from L-serine and tRNA(Sec): step 1/1. Functionally, catalyzes the attachment of serine to tRNA(Ser). Is also able to aminoacylate tRNA(Sec) with serine, to form the misacylated tRNA L-seryl-tRNA(Sec), which will be further converted into selenocysteinyl-tRNA(Sec). This chain is Serine--tRNA ligase, found in Chlamydia caviae (strain ATCC VR-813 / DSM 19441 / 03DC25 / GPIC) (Chlamydophila caviae).